The sequence spans 119 residues: Nascent polypeptide-associated complex protein (119 aa).

Residues Arg-5 to Glu-73 form the NAC-A/B domain.

It belongs to the NAC-alpha family. In terms of assembly, homodimer. Interacts with the ribosome. Binds ribosomal RNA.

Its function is as follows. Contacts the emerging nascent chain on the ribosome. The polypeptide is Nascent polypeptide-associated complex protein (Thermoplasma acidophilum (strain ATCC 25905 / DSM 1728 / JCM 9062 / NBRC 15155 / AMRC-C165)).